The primary structure comprises 41 residues: Large ribosomal subunit protein bL36 (41 aa).

This sequence belongs to the bacterial ribosomal protein bL36 family.

The sequence is that of Large ribosomal subunit protein bL36 from Opitutus terrae (strain DSM 11246 / JCM 15787 / PB90-1).